The chain runs to 407 residues: Putative cystathionine beta-lyase (407 aa).

An N6-(pyridoxal phosphate)lysine modification is found at K237.

It belongs to the class-II pyridoxal-phosphate-dependent aminotransferase family. MalY/PatB cystathionine beta-lyase subfamily. It depends on pyridoxal 5'-phosphate as a cofactor.

The enzyme catalyses L,L-cystathionine + H2O = L-homocysteine + pyruvate + NH4(+). It carries out the reaction an S-substituted L-cysteine + H2O = a thiol + pyruvate + NH4(+). The protein operates within amino-acid biosynthesis; L-methionine biosynthesis via de novo pathway; L-homocysteine from L-cystathionine: step 1/1. The sequence is that of Putative cystathionine beta-lyase from Mycobacterium tuberculosis (strain CDC 1551 / Oshkosh).